The chain runs to 330 residues: Ribosomal RNA small subunit methyltransferase C (330 aa).

The protein belongs to the methyltransferase superfamily. RsmC family. In terms of assembly, monomer.

Its subcellular location is the cytoplasm. It catalyses the reaction guanosine(1207) in 16S rRNA + S-adenosyl-L-methionine = N(2)-methylguanosine(1207) in 16S rRNA + S-adenosyl-L-homocysteine + H(+). Its function is as follows. Specifically methylates the guanine in position 1207 of 16S rRNA in the 30S particle. The polypeptide is Ribosomal RNA small subunit methyltransferase C (Haemophilus influenzae (strain PittEE)).